A 203-amino-acid polypeptide reads, in one-letter code: ATP-dependent Clp protease proteolytic subunit (203 aa).

Residue Ser107 is the Nucleophile of the active site. The active site involves His132.

The protein belongs to the peptidase S14 family. In terms of assembly, fourteen ClpP subunits assemble into 2 heptameric rings which stack back to back to give a disk-like structure with a central cavity, resembling the structure of eukaryotic proteasomes.

The protein resides in the cytoplasm. It carries out the reaction Hydrolysis of proteins to small peptides in the presence of ATP and magnesium. alpha-casein is the usual test substrate. In the absence of ATP, only oligopeptides shorter than five residues are hydrolyzed (such as succinyl-Leu-Tyr-|-NHMec, and Leu-Tyr-Leu-|-Tyr-Trp, in which cleavage of the -Tyr-|-Leu- and -Tyr-|-Trp bonds also occurs).. Functionally, cleaves peptides in various proteins in a process that requires ATP hydrolysis. Has a chymotrypsin-like activity. Plays a major role in the degradation of misfolded proteins. The protein is ATP-dependent Clp protease proteolytic subunit of Shewanella sediminis (strain HAW-EB3).